The following is a 255-amino-acid chain: Homeobox protein DLX-1 (255 aa).

Residues 1-14 (MTMTTMPESLNSPV) are compositionally biased toward polar residues. Disordered regions lie at residues 1-38 (MTMT…MSHG) and 95-118 (SLAQ…EGGE). Residues 25–36 (PPNQQMSPSPMS) are compositionally biased toward low complexity. The segment covering 100–112 (RLEDPGADSEKST) has biased composition (basic and acidic residues). The segment at residues 128-187 (IRKPRTIYSSLQLQALNRRFQQTQYLALPERAELAASLGLTQTQVKIWFQNKRSKFKKLM) is a DNA-binding region (homeobox). The segment at 204–233 (ALSAGSPPVPPGWNPNSSSGKGSGSSAGSY) is disordered. Over residues 217 to 232 (NPNSSSGKGSGSSAGS) the composition is skewed to low complexity.

It belongs to the distal-less homeobox family. As to quaternary structure, interacts with SMAD4 (via homeobox DNA-binding domain). Interacts (via homeobox DNA-binding domain) with POU4F2; this interaction suppresses DLX1-mediated transcriptional activity in postnatal retina and enhances retinal ganglion cell (RGC) differentiation. As to expression, expressed in a restricted region of the developing brain, within the diencephalon and the adjacent telencephalic regions.

It localises to the nucleus. Its function is as follows. Plays a role as a transcriptional activator or repressor. Inhibits several cytokine signaling pathways, such as TGFB1, activin-A/INHBA and BMP4 by interfering with the transcriptional stimulatory activity of transcription factors, such as MSX2, FAST2, SMAD2 and SMAD3 during hematopoietic cell differentiation. Plays a role in terminal differentiation of interneurons, such as amacrine and bipolar cells in the developing retina. Likely to play a regulatory role in the development of the ventral forebrain. May play a role in craniofacial patterning and morphogenesis and may be involved in the early development of diencephalic subdivisions. The chain is Homeobox protein DLX-1 (Dlx1) from Mus musculus (Mouse).